A 313-amino-acid polypeptide reads, in one-letter code: Protoheme IX farnesyltransferase (313 aa).

8 helical membrane-spanning segments follow: residues 34-54 (VIEL…RGTV), 56-76 (PLLI…ANTL), 105-125 (HALI…WSTT), 128-148 (LSAH…TLLL), 152-172 (TSQN…IGWS), 173-193 (AVTG…FFWT), 237-257 (VLAT…VAIL), and 291-311 (YLAV…PTLL).

It belongs to the UbiA prenyltransferase family. Protoheme IX farnesyltransferase subfamily.

Its subcellular location is the cell membrane. The catalysed reaction is heme b + (2E,6E)-farnesyl diphosphate + H2O = Fe(II)-heme o + diphosphate. It participates in porphyrin-containing compound metabolism; heme O biosynthesis; heme O from protoheme: step 1/1. Its function is as follows. Converts heme B (protoheme IX) to heme O by substitution of the vinyl group on carbon 2 of heme B porphyrin ring with a hydroxyethyl farnesyl side group. The chain is Protoheme IX farnesyltransferase from Mycolicibacterium gilvum (strain PYR-GCK) (Mycobacterium gilvum (strain PYR-GCK)).